We begin with the raw amino-acid sequence, 197 residues long: Holliday junction branch migration complex subunit RuvA (197 aa).

Residues Met-1–Phe-64 are domain I. The interval Thr-65 to Asp-143 is domain II. The segment at Leu-144 to Ser-154 is flexible linker. The interval Ser-154 to Gly-197 is domain III.

Belongs to the RuvA family. Homotetramer. Forms an RuvA(8)-RuvB(12)-Holliday junction (HJ) complex. HJ DNA is sandwiched between 2 RuvA tetramers; dsDNA enters through RuvA and exits via RuvB. An RuvB hexamer assembles on each DNA strand where it exits the tetramer. Each RuvB hexamer is contacted by two RuvA subunits (via domain III) on 2 adjacent RuvB subunits; this complex drives branch migration. In the full resolvosome a probable DNA-RuvA(4)-RuvB(12)-RuvC(2) complex forms which resolves the HJ.

It is found in the cytoplasm. Its function is as follows. The RuvA-RuvB-RuvC complex processes Holliday junction (HJ) DNA during genetic recombination and DNA repair, while the RuvA-RuvB complex plays an important role in the rescue of blocked DNA replication forks via replication fork reversal (RFR). RuvA specifically binds to HJ cruciform DNA, conferring on it an open structure. The RuvB hexamer acts as an ATP-dependent pump, pulling dsDNA into and through the RuvAB complex. HJ branch migration allows RuvC to scan DNA until it finds its consensus sequence, where it cleaves and resolves the cruciform DNA. This chain is Holliday junction branch migration complex subunit RuvA, found in Clostridium tetani (strain Massachusetts / E88).